Here is a 728-residue protein sequence, read N- to C-terminus: Ribosome biogenesis protein bop1-A (728 aa).

Positions 1–114 (MKRGSQGEAG…ENDSSDEEDI (114 aa)) are disordered. The segment covering 55 to 67 (SDDEEDHWSEEEE) has biased composition (acidic residues). Positions 68–77 (NPGKSPKEII) are enriched in basic and acidic residues. 7 WD repeats span residues 393 to 432 (GHKDLVRCISVSPSGQWLVSGSDDCSVRFWEVSTGRCMKS), 434 to 474 (VLEG…RLLC), 514 to 556 (KHQK…SQNP), 559 to 597 (KNKGQVQKVLFHPTRPFFFVATQRYVRVYNLLKQELTKK), 600 to 639 (TNCKWVSSIAVHPAGDNLICGSYDSKLAWFDMDLSTKPYK), 643 to 682 (HHKKALRAVSFHKSYPLFASGSDDGSVIVCHGMVYNDLLQ), and 698 to 728 (HRDLGVLDVTFHPTQPWVFSSGADATIRLFT).

The protein belongs to the WD repeat BOP1/ERB1 family. Component of the PeBoW complex, composed of bop1, pes1 and wdr12. The complex is held together by bop1, which interacts with pes1 via its N-terminal domain and with wdr12 via a high-affinity interaction between the seven-bladed beta-propeller domains of the 2 proteins. The PeBoW complex associates with the 66S pre-ribosome.

Its subcellular location is the nucleus. The protein localises to the nucleolus. It is found in the nucleoplasm. Functionally, component of the PeBoW complex, which is required for maturation of 28S and 5.8S ribosomal RNAs and formation of the 60S ribosome. This is Ribosome biogenesis protein bop1-A (bop1-a) from Xenopus laevis (African clawed frog).